We begin with the raw amino-acid sequence, 493 residues long: DM7 family protein GM11958 (493 aa).

The disordered stretch occupies residues 434–493 (ATKSTDTRDDGMNTADYQSQFPELEQDSEPEPEPEPEPQTEDEGEDEDIEILASLCSGSI). Residues 457–483 (LEQDSEPEPEPEPEPQTEDEGEDEDIE) are compositionally biased toward acidic residues.

It belongs to the DM7 family.

The polypeptide is DM7 family protein GM11958 (Drosophila sechellia (Fruit fly)).